A 299-amino-acid chain; its full sequence is Inactive recombination-promoting nuclease-like protein RpnE (299 aa).

The protein belongs to the Rpn/YhgA-like nuclease family.

Upon expression has no effect on RecA-independent DNA recombination, cell viability or DNA damage. The chain is Inactive recombination-promoting nuclease-like protein RpnE (yfaD) from Escherichia coli (strain K12).